The sequence spans 335 residues: Fructose-1,6-bisphosphatase class 1 (335 aa).

Mg(2+)-binding residues include Glu-92, Asp-114, Leu-116, and Asp-117. Substrate-binding positions include 117 to 120 (DGSS), Asn-209, and Lys-275. Residue Glu-281 coordinates Mg(2+).

It belongs to the FBPase class 1 family. Homotetramer. The cofactor is Mg(2+).

It localises to the cytoplasm. The catalysed reaction is beta-D-fructose 1,6-bisphosphate + H2O = beta-D-fructose 6-phosphate + phosphate. It functions in the pathway carbohydrate biosynthesis; gluconeogenesis. The protein is Fructose-1,6-bisphosphatase class 1 of Polaromonas sp. (strain JS666 / ATCC BAA-500).